Reading from the N-terminus, the 100-residue chain is Urease subunit gamma (100 aa).

Belongs to the urease gamma subunit family. Heterotrimer of UreA (gamma), UreB (beta) and UreC (alpha) subunits. Three heterotrimers associate to form the active enzyme.

It is found in the cytoplasm. The enzyme catalyses urea + 2 H2O + H(+) = hydrogencarbonate + 2 NH4(+). It functions in the pathway nitrogen metabolism; urea degradation; CO(2) and NH(3) from urea (urease route): step 1/1. The protein is Urease subunit gamma of Pseudomonas putida (strain W619).